A 351-amino-acid polypeptide reads, in one-letter code: tRNA pseudouridine synthase D (351 aa).

The Nucleophile role is filled by D81. The 147-residue stretch at 158-304 (GVPNYFGSQR…MRHERRAIEL (147 aa)) folds into the TRUD domain.

It belongs to the pseudouridine synthase TruD family.

It catalyses the reaction uridine(13) in tRNA = pseudouridine(13) in tRNA. In terms of biological role, responsible for synthesis of pseudouridine from uracil-13 in transfer RNAs. The polypeptide is tRNA pseudouridine synthase D (Aliivibrio fischeri (strain MJ11) (Vibrio fischeri)).